The following is a 350-amino-acid chain: tRNA uridine(34) hydroxylase (350 aa).

One can recognise a Rhodanese domain in the interval 146-240 (DDPDAVFIDM…YARRARAQGL (95 aa)). The Cysteine persulfide intermediate role is filled by Cys200. The segment covering 319–328 (RRRRAGRENG) has biased composition (basic and acidic residues). A disordered region spans residues 319-350 (RRRRAGRENGNKIFNKSRGRLNSKLSIPDPAE).

Belongs to the TrhO family.

The catalysed reaction is uridine(34) in tRNA + AH2 + O2 = 5-hydroxyuridine(34) in tRNA + A + H2O. Functionally, catalyzes oxygen-dependent 5-hydroxyuridine (ho5U) modification at position 34 in tRNAs. The chain is tRNA uridine(34) hydroxylase from Salmonella typhimurium (strain LT2 / SGSC1412 / ATCC 700720).